The chain runs to 330 residues: Phosphate acyltransferase (330 aa).

The protein belongs to the PlsX family. In terms of assembly, homodimer. Probably interacts with PlsY.

It localises to the cytoplasm. The catalysed reaction is a fatty acyl-[ACP] + phosphate = an acyl phosphate + holo-[ACP]. It participates in lipid metabolism; phospholipid metabolism. Its function is as follows. Catalyzes the reversible formation of acyl-phosphate (acyl-PO(4)) from acyl-[acyl-carrier-protein] (acyl-ACP). This enzyme utilizes acyl-ACP as fatty acyl donor, but not acyl-CoA. This Streptococcus pneumoniae serotype 2 (strain D39 / NCTC 7466) protein is Phosphate acyltransferase.